We begin with the raw amino-acid sequence, 118 residues long: UPF0148 protein M1627_1409 (118 aa).

It belongs to the UPF0148 family.

The polypeptide is UPF0148 protein M1627_1409 (Saccharolobus islandicus (strain M.16.27) (Sulfolobus islandicus)).